The primary structure comprises 269 residues: GATA transcription factor 3 (269 aa).

Residues 136–143 (KPRTKRSR) carry the Nuclear localization signal motif. A GATA-type zinc finger spans residues 176 to 230 (LVFQRRCSHCGTNNTPQWRTGPVGPKTLCNACGVRFKSGRLCPEYRPADSPTFSN). Residues 245 to 269 (KSKELGEETGEASTKSDPVKFGSKW) are disordered.

The protein belongs to the type IV zinc-finger family. Class A subfamily. In terms of tissue distribution, mostly expressed in roots. Also expressed in stems, flowers and leaves.

Its subcellular location is the nucleus. Functionally, transcriptional activator that specifically binds 5'-GATA-3' or 5'-GAT-3' motifs within gene promoters. May be involved in the regulation of some light-responsive genes. The protein is GATA transcription factor 3 (GATA3) of Arabidopsis thaliana (Mouse-ear cress).